Consider the following 439-residue polypeptide: Cln5-like protein 3 (439 aa).

Positions 1 to 24 (MKNMLNIILTLTIIFIGLIKISIS) are cleaved as a signal peptide. 10 N-linked (GlcNAc...) asparagine glycosylation sites follow: asparagine 93, asparagine 112, asparagine 122, asparagine 138, asparagine 168, asparagine 219, asparagine 268, asparagine 289, asparagine 304, and asparagine 359. The helical transmembrane segment at 371–391 (IIFISIAIGFGVVIILYISIG) threads the bilayer.

Belongs to the CLN5 family.

The protein localises to the membrane. This is Cln5-like protein 3 (cln5lc) from Dictyostelium discoideum (Social amoeba).